A 226-amino-acid chain; its full sequence is Thioredoxin domain-containing protein 9 (226 aa).

Residues 75-180 (EIGSERDFFQ…TTETLEWRLG (106 aa)) form the Thioredoxin domain. Residues Ser188, Ser221, and Ser223 each carry the phosphoserine modification.

In terms of assembly, forms ternary complexes with the chaperonin TCP1 complex, spanning the cylindrical chaperonin cavity and contacting at least 2 subunits. Expressed in testis, liver, heart, kidney, brain, spleen and lung.

It is found in the cytoplasm. It localises to the nucleus. Its subcellular location is the cytoskeleton. The protein resides in the microtubule organizing center. The protein localises to the centrosome. It is found in the midbody. Functionally, significantly diminishes the chaperonin TCP1 complex ATPase activity, thus negatively impacts protein folding, including that of actin or tubulin. The chain is Thioredoxin domain-containing protein 9 (Txndc9) from Mus musculus (Mouse).